The chain runs to 162 residues: MGENTSLEKATFGAGCFWHVEEEFRRVPGVVSTLAGYMGGWKEHPTYEEVCSKTTGHAEVVEVTFDPAAVTYDHLLRVFWDCHDPTQLNRQGPDIGTNYRSVIFYHSPDQERAARASLEHEQRSGRHARPIVTEIVPAATFWWAEEYHQHYLEKRGGGSCRW.

Residue C16 is part of the active site.

Belongs to the MsrA Met sulfoxide reductase family.

The enzyme catalyses L-methionyl-[protein] + [thioredoxin]-disulfide + H2O = L-methionyl-(S)-S-oxide-[protein] + [thioredoxin]-dithiol. It carries out the reaction [thioredoxin]-disulfide + L-methionine + H2O = L-methionine (S)-S-oxide + [thioredoxin]-dithiol. In terms of biological role, has an important function as a repair enzyme for proteins that have been inactivated by oxidation. Catalyzes the reversible oxidation-reduction of methionine sulfoxide in proteins to methionine. The polypeptide is Peptide methionine sulfoxide reductase MsrA (Geobacter sulfurreducens (strain ATCC 51573 / DSM 12127 / PCA)).